Here is a 446-residue protein sequence, read N- to C-terminus: Probable arogenate/prephenate dehydrogenase (446 aa).

A Prephenate/arogenate dehydrogenase domain is found at 6–288; that stretch reads LTISIIGGTD…SEAKRGAYYS (283 aa).

This sequence in the N-terminal section; belongs to the prephenate/arogenate dehydrogenase family.

This chain is Probable arogenate/prephenate dehydrogenase, found in Methanocaldococcus jannaschii (strain ATCC 43067 / DSM 2661 / JAL-1 / JCM 10045 / NBRC 100440) (Methanococcus jannaschii).